The chain runs to 254 residues: Diphthine synthase (254 aa).

Residues Asp83, Leu86, 111–112 (SI), Leu163, and Val205 each bind S-adenosyl-L-methionine.

This sequence belongs to the diphthine synthase family. As to quaternary structure, homodimer.

It catalyses the reaction 2-[(3S)-amino-3-carboxypropyl]-L-histidyl-[translation elongation factor 2] + 3 S-adenosyl-L-methionine = diphthine-[translation elongation factor 2] + 3 S-adenosyl-L-homocysteine + 3 H(+). Its pathway is protein modification; peptidyl-diphthamide biosynthesis. Functionally, S-adenosyl-L-methionine-dependent methyltransferase that catalyzes the trimethylation of the amino group of the modified target histidine residue in translation elongation factor 2 (EF-2), to form an intermediate called diphthine. The three successive methylation reactions represent the second step of diphthamide biosynthesis. The polypeptide is Diphthine synthase (Pyrobaculum aerophilum (strain ATCC 51768 / DSM 7523 / JCM 9630 / CIP 104966 / NBRC 100827 / IM2)).